Here is a 117-residue protein sequence, read N- to C-terminus: MSGEVSYHAGQTAEEAVARIYDRSGRPVAARRWRGLSGEIDLIAREGAEVIFIEVKKSTSHAAAAARLSRRQMDRIYGAASEFLAGEPRGQLTASRFDVALVDALGRVEIIENAFAA.

This sequence belongs to the UPF0102 family.

This chain is UPF0102 protein RSKD131_0118, found in Cereibacter sphaeroides (strain KD131 / KCTC 12085) (Rhodobacter sphaeroides).